The following is a 349-amino-acid chain: Anthranilate phosphoribosyltransferase (349 aa).

5-phospho-alpha-D-ribose 1-diphosphate contacts are provided by residues G82, 85–86 (GD), T90, 92–95 (NVST), 110–118 (KHGNRSVSS), and G122. G82 contacts anthranilate. Residue S94 participates in Mg(2+) binding. Residue N113 participates in anthranilate binding. R168 contacts anthranilate. Residues D232 and E233 each coordinate Mg(2+).

It belongs to the anthranilate phosphoribosyltransferase family. In terms of assembly, homodimer. Requires Mg(2+) as cofactor.

The enzyme catalyses N-(5-phospho-beta-D-ribosyl)anthranilate + diphosphate = 5-phospho-alpha-D-ribose 1-diphosphate + anthranilate. The protein operates within amino-acid biosynthesis; L-tryptophan biosynthesis; L-tryptophan from chorismate: step 2/5. Its function is as follows. Catalyzes the transfer of the phosphoribosyl group of 5-phosphorylribose-1-pyrophosphate (PRPP) to anthranilate to yield N-(5'-phosphoribosyl)-anthranilate (PRA). The chain is Anthranilate phosphoribosyltransferase from Methanosphaera stadtmanae (strain ATCC 43021 / DSM 3091 / JCM 11832 / MCB-3).